A 467-amino-acid polypeptide reads, in one-letter code: Membrane-bound lytic murein transglycosylase F (467 aa).

The signal sequence occupies residues 1 to 33 (MTELFRHSKHLLASLALLSVLGLMLAMHPSPSA). The non-LT domain stretch occupies residues 34–266 (IERIMARGEL…KLEDRFYGHV (233 aa)). Residues 268-467 (QFNLYAARSF…RRDDTLIALN (200 aa)) are LT domain. E313 is a catalytic residue.

The protein in the N-terminal section; belongs to the bacterial solute-binding protein 3 family. In the C-terminal section; belongs to the transglycosylase Slt family.

Its subcellular location is the cell outer membrane. The catalysed reaction is Exolytic cleavage of the (1-&gt;4)-beta-glycosidic linkage between N-acetylmuramic acid (MurNAc) and N-acetylglucosamine (GlcNAc) residues in peptidoglycan, from either the reducing or the non-reducing ends of the peptidoglycan chains, with concomitant formation of a 1,6-anhydrobond in the MurNAc residue.. Murein-degrading enzyme that degrades murein glycan strands and insoluble, high-molecular weight murein sacculi, with the concomitant formation of a 1,6-anhydromuramoyl product. Lytic transglycosylases (LTs) play an integral role in the metabolism of the peptidoglycan (PG) sacculus. Their lytic action creates space within the PG sacculus to allow for its expansion as well as for the insertion of various structures such as secretion systems and flagella. The protein is Membrane-bound lytic murein transglycosylase F of Alcanivorax borkumensis (strain ATCC 700651 / DSM 11573 / NCIMB 13689 / SK2).